Reading from the N-terminus, the 263-residue chain is Acetyl-coenzyme A carboxylase carboxyl transferase subunit beta (263 aa).

In terms of domain architecture, CoA carboxyltransferase N-terminal spans 1-263 (MDCPSCKVSY…LKETPKKKKA (263 aa)). Zn(2+) contacts are provided by cysteine 3, cysteine 6, cysteine 22, and cysteine 25. The segment at 3 to 25 (CPSCKVSYDEEVFTDNLMVCPHC) adopts a C4-type zinc-finger fold.

The protein belongs to the AccD/PCCB family. Acetyl-CoA carboxylase is a heterohexamer composed of biotin carboxyl carrier protein (AccB), biotin carboxylase (AccC) and two subunits each of ACCase subunit alpha (AccA) and ACCase subunit beta (AccD). The cofactor is Zn(2+).

The protein localises to the cytoplasm. The enzyme catalyses N(6)-carboxybiotinyl-L-lysyl-[protein] + acetyl-CoA = N(6)-biotinyl-L-lysyl-[protein] + malonyl-CoA. It participates in lipid metabolism; malonyl-CoA biosynthesis; malonyl-CoA from acetyl-CoA: step 1/1. Functionally, component of the acetyl coenzyme A carboxylase (ACC) complex. Biotin carboxylase (BC) catalyzes the carboxylation of biotin on its carrier protein (BCCP) and then the CO(2) group is transferred by the transcarboxylase to acetyl-CoA to form malonyl-CoA. In Treponema denticola (strain ATCC 35405 / DSM 14222 / CIP 103919 / JCM 8153 / KCTC 15104), this protein is Acetyl-coenzyme A carboxylase carboxyl transferase subunit beta.